Reading from the N-terminus, the 206-residue chain is High frequency lysogenization protein HflD homolog (206 aa).

This sequence belongs to the HflD family.

It localises to the cytoplasm. Its subcellular location is the cell inner membrane. In Pseudomonas paraeruginosa (strain DSM 24068 / PA7) (Pseudomonas aeruginosa (strain PA7)), this protein is High frequency lysogenization protein HflD homolog.